Reading from the N-terminus, the 135-residue chain is Ribosome-binding factor A (135 aa).

The protein belongs to the RbfA family. In terms of assembly, monomer. Binds 30S ribosomal subunits, but not 50S ribosomal subunits or 70S ribosomes.

It is found in the cytoplasm. In terms of biological role, one of several proteins that assist in the late maturation steps of the functional core of the 30S ribosomal subunit. Associates with free 30S ribosomal subunits (but not with 30S subunits that are part of 70S ribosomes or polysomes). Required for efficient processing of 16S rRNA. May interact with the 5'-terminal helix region of 16S rRNA. This Novosphingobium aromaticivorans (strain ATCC 700278 / DSM 12444 / CCUG 56034 / CIP 105152 / NBRC 16084 / F199) protein is Ribosome-binding factor A.